The chain runs to 323 residues: tRNA dimethylallyltransferase (323 aa).

12–19 (GPTASGKT) is an ATP binding site. 14-19 (TASGKT) contacts substrate. Interaction with substrate tRNA regions lie at residues 37–40 (DSAL) and 161–165 (QRLVR).

The protein belongs to the IPP transferase family. Monomer. Mg(2+) serves as cofactor.

It carries out the reaction adenosine(37) in tRNA + dimethylallyl diphosphate = N(6)-dimethylallyladenosine(37) in tRNA + diphosphate. Catalyzes the transfer of a dimethylallyl group onto the adenine at position 37 in tRNAs that read codons beginning with uridine, leading to the formation of N6-(dimethylallyl)adenosine (i(6)A). This is tRNA dimethylallyltransferase from Azotobacter vinelandii (strain DJ / ATCC BAA-1303).